A 405-amino-acid polypeptide reads, in one-letter code: Peroxisome biogenesis factor 3 (405 aa).

Residues 1-26 (MENFQFEDLSPNKVSKVYQDLKKFGS) are Cytoplasmic-facing. The helical transmembrane segment at 27-49 (FLYNHKMGVFLVSFSSGVAYLYH) threads the bilayer. Topologically, residues 50–124 (NITQSHKRKQ…EKLKLTDQLK (75 aa)) are peroxisomal. The chain crosses the membrane as a helical span at residues 125–144 (VSIITKLFSVLYIIPMVTIF). Residues 145–405 (NRLQINLIGK…NDLDFNKVQF (261 aa)) are Cytoplasmic-facing.

It belongs to the peroxin-3 family.

It localises to the peroxisome membrane. In terms of biological role, involved in peroxisome biosynthesis. The polypeptide is Peroxisome biogenesis factor 3 (pex3) (Dictyostelium discoideum (Social amoeba)).